A 114-amino-acid polypeptide reads, in one-letter code: Gas vesicle protein J1 (114 aa).

An alpha helix 1 region spans residues Leu13 to Asp22. Beta-strand stretches follow at residues Val25–Val35 and Leu40–Ala50. The short motif at Arg46–Ala50 is the Conserved in GvpM1/2 but not GvpA element. Alpha helix stretches follow at residues Phe52 to Glu72, Ser78 to Glu87, and Thr95 to Thr105. Residues Pro63–Lys114 form a disordered region. Polar residues predominate over residues Ala75–Leu98. Residues Ser99 to Lys114 are compositionally biased toward low complexity.

This sequence belongs to the gas vesicle GvpA family. As to quaternary structure, gvpF to GvpM interact with each other in vitro, and may form multi-subunit complex(es). Interacts with GvpA1.

The protein resides in the gas vesicle. Its function is as follows. Proteins GvpF to GvpM might be involved in nucleating gas vesicle formation. Mutagenesis of residues 13-61 shows that almost none of them can be substituted and still make gas vesicles. A minor component of the gas vesicle. Gas vesicles are hollow, gas filled proteinaceous nanostructures found in several microbial planktonic microorganisms. They allow positioning of halobacteria at the optimal depth for growth in the poorly aerated, shallow brine pools of their habitat. In terms of biological role, expression of a 9.5 kb p-vac DNA fragment containing 2 divergently transcribed regions (gvpD-gvpE-gvpF-gvpG-gvpH-gvpI-gvpJ-gvpK-gvpL-gvpM and gvpA-gvpC-gvpN-gvpO) allows H.volcanii to produce gas vesicles. All site-directed mutagenesis is tested in H.volcanii. A minimal gas vesicle can be made in H.volcanii by gvpA1-gvpO1 plus gvpF1-gvpG1-gvpJ1-gvpK1-gvpL1-gvpM1; lack of enough GvpJ1 prevents formation. A similar region restores gas vesicle production in H.halobium without the p-vac locus, but it still has the c-vac locus. The chain is Gas vesicle protein J1 (gvpJ11) from Halobacterium salinarum (strain ATCC 700922 / JCM 11081 / NRC-1) (Halobacterium halobium).